The sequence spans 71 residues: UPF0437 protein asl1434 (71 aa).

It belongs to the UPF0437 family.

The protein is UPF0437 protein asl1434 of Nostoc sp. (strain PCC 7120 / SAG 25.82 / UTEX 2576).